Reading from the N-terminus, the 1390-residue chain is Hepatocyte growth factor receptor (1390 aa).

The first 24 residues, 1–24 (MKAPAVLAPGILVLLFTLVQRSNG), serve as a signal peptide directing secretion. Topologically, residues 25-932 (ECKEALAKSE…VIVQPDQNFT (908 aa)) are extracellular. A Sema domain is found at 27–515 (KEALAKSEMN…TGKKITKIPL (489 aa)). N45 carries an N-linked (GlcNAc...) asparagine glycan. 4 disulfide bridges follow: C95-C101, C98-C160, C133-C141, and C172-C175. N106 carries N-linked (GlcNAc...) asparagine glycosylation. Residue N149 is glycosylated (N-linked (GlcNAc...) asparagine). An N-linked (GlcNAc...) asparagine glycan is attached at N202. 2 disulfides stabilise this stretch: C298/C363 and C385/C397. N-linked (GlcNAc...) asparagine glycans are attached at residues N399 and N405. 4 disulfide bridges follow: C520–C538, C526–C561, C529–C545, and C541–C551. IPT/TIG domains follow at residues 563 to 655 (PAIY…FSYV), 657 to 739 (PVIT…FSYR), and 742 to 836 (PIVY…LIYV). Residue T582 is glycosylated (O-linked (Man) threonine). Residues N607 and N635 are each glycosylated (N-linked (GlcNAc...) asparagine). 2 O-linked (Man) threonine glycosylation sites follow: T676 and T761. N785, N879, and N930 each carry an N-linked (GlcNAc...) asparagine glycan. A helical transmembrane segment spans residues 933 to 955 (GLIAGVVSISIALLLLLGFFLWL). Topologically, residues 956–1390 (KKRKQIKDLG…TRPASFWETS (435 aa)) are cytoplasmic. Residue S966 is modified to Phosphoserine. Position 977 is a phosphothreonine (T977). Phosphoserine occurs at positions 990, 997, and 1000. Residue Y1003 is modified to Phosphotyrosine. In terms of domain architecture, Protein kinase spans 1078-1345 (VHFNEVIGRG…RISAIFSTFI (268 aa)). Residues 1084–1092 (IGRGHFGCV) and K1110 contribute to the ATP site. The active-site Proton acceptor is D1204. An interaction with RANBP9 region spans residues 1212–1390 (LDEKFTVKVA…TRPASFWETS (179 aa)). At Y1230 the chain carries Phosphotyrosine. Phosphotyrosine; by autocatalysis occurs at positions 1234 and 1235. T1289 is subject to Phosphothreonine. Positions 1320–1359 (WHPKAEMRPSFSELVSRISAIFSTFIGEHYVHVNATYVNV) are interaction with MUC20. Residues Y1349 and Y1356 each carry the phosphotyrosine; by autocatalysis modification. Y1365 bears the Phosphotyrosine mark.

This sequence belongs to the protein kinase superfamily. Tyr protein kinase family. Heterodimer made of an alpha chain (50 kDa) and a beta chain (145 kDa) which are disulfide linked. Binds PLXNB1. Interacts when phosphorylated with downstream effectors including STAT3, PIK3R1, SRC, PCLG1, GRB2 and GAB1. Interacts with SPSB1, SPSB2 and SPSB4. Interacts with INPP5D/SHIP1. When phosphorylated at Tyr-1356, interacts with INPPL1/SHIP2. Interacts with RANBP9 and RANBP10, as well as SPSB1, SPSB2, SPSB3 and SPSB4. SPSB1 binding occurs in the presence and in the absence of HGF, however HGF treatment has a positive effect on this interaction. Interacts with MUC20; prevents interaction with GRB2 and suppresses hepatocyte growth factor-induced cell proliferation. Interacts with GRB10. Interacts with PTPN1 and PTPN2. Interacts with HSP90AA1 and HSP90AB1; the interaction suppresses MET kinase activity. Interacts with tensin TNS3. Interacts (when phosphorylated) with tensin TNS4 (via SH2 domain); the interaction increases MET protein stability by inhibiting MET endocytosis and subsequent lysosomal degradation. Autophosphorylated in response to ligand binding on Tyr-1234 and Tyr-1235 in the kinase domain leading to further phosphorylation of Tyr-1349 and Tyr-1356 in the C-terminal multifunctional docking site. Dephosphorylated by PTPRJ at Tyr-1349 and Tyr-1365. Dephosphorylated by PTPN1 and PTPN2. In terms of processing, ubiquitinated. Ubiquitination by CBL regulates the receptor stability and activity through proteasomal degradation. Post-translationally, O-mannosylation of IPT/TIG domains by TMEM260 is required for protein maturation. O-mannosylated residues are composed of single mannose glycans that are not elongated or modified.

It localises to the membrane. It catalyses the reaction L-tyrosyl-[protein] + ATP = O-phospho-L-tyrosyl-[protein] + ADP + H(+). Its activity is regulated as follows. In its inactive state, the C-terminal tail interacts with the catalytic domain and inhibits the kinase activity. Upon ligand binding, the C-terminal tail is displaced and becomes phosphorylated, thus increasing the kinase activity. Functionally, receptor tyrosine kinase that transduces signals from the extracellular matrix into the cytoplasm by binding to hepatocyte growth factor/HGF ligand. Regulates many physiological processes including proliferation, scattering, morphogenesis and survival. Ligand binding at the cell surface induces autophosphorylation of MET on its intracellular domain that provides docking sites for downstream signaling molecules. Following activation by ligand, interacts with the PI3-kinase subunit PIK3R1, PLCG1, SRC, GRB2, STAT3 or the adapter GAB1. Recruitment of these downstream effectors by MET leads to the activation of several signaling cascades including the RAS-ERK, PI3 kinase-AKT, or PLCgamma-PKC. The RAS-ERK activation is associated with the morphogenetic effects while PI3K/AKT coordinates prosurvival effects. During embryonic development, MET signaling plays a role in gastrulation, development and migration of muscles and neuronal precursors, angiogenesis and kidney formation. In adults, participates in wound healing as well as organ regeneration and tissue remodeling. Also promotes differentiation and proliferation of hematopoietic cells. This is Hepatocyte growth factor receptor (MET) from Pan troglodytes (Chimpanzee).